The following is a 512-amino-acid chain: Dihydroniloticin synthase CYP71CD1 (512 aa).

A helical transmembrane segment spans residues 7 to 27 (YFTVTSLLVFLTFLLRLVWGW). C451 serves as a coordination point for heme.

It belongs to the cytochrome P450 family. The cofactor is heme. In terms of tissue distribution, accumulates in mature fruits and in juice vesicles.

It is found in the membrane. The enzyme catalyses tirucalla-7,24-dien-3beta-ol + 2 reduced [NADPH--hemoprotein reductase] + 2 O2 = dihydroniloticin + 2 oxidized [NADPH--hemoprotein reductase] + 2 H2O + 2 H(+). Its pathway is secondary metabolite biosynthesis; terpenoid biosynthesis. Functionally, monooxygenase involved in the biosynthesis of limonoids triterpene natural products such as limonin, a compound with insecticidal activity responsible for the bitter taste in citrus. Catalyzes the conversion of tirucalladienol to dihydroniloticin. The sequence is that of Dihydroniloticin synthase CYP71CD1 from Citrus sinensis (Sweet orange).